The following is a 673-amino-acid chain: DNA ligase (673 aa).

An NAD(+)-binding site is contributed by 34–38 (DAAFD). A disordered region spans residues 54–73 (LRRPDSPTQRVGGATAPDFA). NAD(+) is bound by residues 83-84 (SL) and glutamate 114. Lysine 116 acts as the N6-AMP-lysine intermediate in catalysis. NAD(+)-binding residues include arginine 137, glutamate 176, lysine 292, and lysine 316. Zn(2+) is bound by residues cysteine 410, cysteine 413, cysteine 428, and cysteine 433. One can recognise a BRCT domain in the interval 594–673 (PAEGPLAGMT…DEFCERYLQG (80 aa)).

This sequence belongs to the NAD-dependent DNA ligase family. LigA subfamily. It depends on Mg(2+) as a cofactor. Mn(2+) serves as cofactor.

It carries out the reaction NAD(+) + (deoxyribonucleotide)n-3'-hydroxyl + 5'-phospho-(deoxyribonucleotide)m = (deoxyribonucleotide)n+m + AMP + beta-nicotinamide D-nucleotide.. DNA ligase that catalyzes the formation of phosphodiester linkages between 5'-phosphoryl and 3'-hydroxyl groups in double-stranded DNA using NAD as a coenzyme and as the energy source for the reaction. It is essential for DNA replication and repair of damaged DNA. This Symbiobacterium thermophilum (strain DSM 24528 / JCM 14929 / IAM 14863 / T) protein is DNA ligase.